The following is a 270-amino-acid chain: Urease accessory protein UreD (270 aa).

It belongs to the UreD family. As to quaternary structure, ureD, UreF and UreG form a complex that acts as a GTP-hydrolysis-dependent molecular chaperone, activating the urease apoprotein by helping to assemble the nickel containing metallocenter of UreC. The UreE protein probably delivers the nickel.

Its subcellular location is the cytoplasm. In terms of biological role, required for maturation of urease via the functional incorporation of the urease nickel metallocenter. This is Urease accessory protein UreD from Klebsiella pneumoniae.